Reading from the N-terminus, the 302-residue chain is Putative fructose-bisphosphate aldolase (302 aa).

Asp-86 functions as the Proton donor in the catalytic mechanism. His-87, Asp-116, Glu-146, and His-192 together coordinate Zn(2+). Position 193 (Gly-193) interacts with dihydroxyacetone phosphate. Residue His-223 participates in Zn(2+) binding. Residues 224-226 (GAD) and 245-248 (NVNR) contribute to the dihydroxyacetone phosphate site.

Belongs to the class II fructose-bisphosphate aldolase family. As to quaternary structure, homodimer. Zn(2+) serves as cofactor.

The catalysed reaction is beta-D-fructose 1,6-bisphosphate = D-glyceraldehyde 3-phosphate + dihydroxyacetone phosphate. The protein operates within carbohydrate degradation; glycolysis; D-glyceraldehyde 3-phosphate and glycerone phosphate from D-glucose: step 4/4. Its function is as follows. Catalyzes the aldol condensation of dihydroxyacetone phosphate (DHAP or glycerone-phosphate) with glyceraldehyde 3-phosphate (G3P) to form fructose 1,6-bisphosphate (FBP) in gluconeogenesis and the reverse reaction in glycolysis. The polypeptide is Putative fructose-bisphosphate aldolase (Coccidioides immitis (strain RS) (Valley fever fungus)).